We begin with the raw amino-acid sequence, 430 residues long: Aspartate aminotransferase, mitochondrial (430 aa).

Residues Met-1–Ala-29 constitute a mitochondrion transit peptide. Position 48 is a phosphothreonine (Thr-48). Residue Lys-59 is modified to N6-acetyllysine. Gly-65 is a substrate binding site. Lys-73 is subject to N6-acetyllysine; alternate. Lys-73 carries the post-translational modification N6-succinyllysine; alternate. N6-acetyllysine is present on Lys-82. Lys-90 bears the N6-acetyllysine; alternate mark. Lys-90 is modified (N6-succinyllysine; alternate). Residue Tyr-96 is modified to 3'-nitrotyrosine; alternate. The residue at position 96 (Tyr-96) is a Phosphotyrosine; alternate. N6-acetyllysine; alternate is present on residues Lys-107 and Lys-122. Lys-107 and Lys-122 each carry N6-succinyllysine; alternate. Phosphoserine is present on Ser-143. Lys-159 is subject to N6-acetyllysine; alternate. Position 159 is an N6-succinyllysine; alternate (Lys-159). Trp-162 contributes to the substrate binding site. Lys-185 bears the N6-acetyllysine; alternate mark. Position 185 is an N6-succinyllysine; alternate (Lys-185). Residue Asn-215 coordinates substrate. Lys-227 is modified (N6-succinyllysine). Lys-234 bears the N6-acetyllysine mark. N6-acetyllysine; alternate is present on residues Lys-279 and Lys-296. The residue at position 279 (Lys-279) is an N6-(pyridoxal phosphate)lysine; alternate. Residue Lys-296 is modified to N6-succinyllysine; alternate. An N6-acetyllysine modification is found at Lys-302. At Lys-309 the chain carries N6-acetyllysine; alternate. An N6-succinyllysine; alternate modification is found at Lys-309. An Asymmetric dimethylarginine modification is found at Arg-313. Phosphothreonine is present on Thr-333. Lys-338 carries the N6-acetyllysine; alternate modification. Position 338 is an N6-succinyllysine; alternate (Lys-338). Position 345 is an N6-acetyllysine (Lys-345). At Lys-363 the chain carries N6-acetyllysine; alternate. At Lys-363 the chain carries N6-succinyllysine; alternate. N6-acetyllysine is present on residues Lys-364 and Lys-387. Residues Lys-396 and Lys-404 each carry the N6-acetyllysine; alternate modification. Residues Lys-396 and Lys-404 each carry the N6-succinyllysine; alternate modification. Arg-407 contributes to the substrate binding site.

Belongs to the class-I pyridoxal-phosphate-dependent aminotransferase family. As to quaternary structure, homodimer. Pyridoxal 5'-phosphate is required as a cofactor.

It is found in the mitochondrion matrix. The protein localises to the cell membrane. It carries out the reaction L-aspartate + 2-oxoglutarate = oxaloacetate + L-glutamate. It catalyses the reaction L-kynurenine + 2-oxoglutarate = kynurenate + L-glutamate + H2O. Its function is as follows. Catalyzes the irreversible transamination of the L-tryptophan metabolite L-kynurenine to form kynurenic acid (KA). As a member of the malate-aspartate shuttle, it has a key role in the intracellular NAD(H) redox balance. Is important for metabolite exchange between mitochondria and cytosol, and for amino acid metabolism. Facilitates cellular uptake of long-chain free fatty acids. This Macaca fascicularis (Crab-eating macaque) protein is Aspartate aminotransferase, mitochondrial (GOT2).